The primary structure comprises 577 residues: Torulene dioxygenase (577 aa).

Residues His239, His291, His361, and His570 each contribute to the Fe(2+) site.

It belongs to the carotenoid oxygenase family. The cofactor is Fe(2+).

Its subcellular location is the cytoplasm. The protein resides in the cytosol. It catalyses the reaction torulene + O2 = 4'-apo-beta-carotenal + 3-methyl-2-butenal. The protein operates within carotenoid biosynthesis. Its function is as follows. Torulene dioxygenase; part of the pathway that mediates the biosynthesis of neurosporaxanthin, a carboxylic apocarotenoid acting as an essential protective pigments and leading to orange pigmentation. CarT mediates the cleavage of torulene into beta-apo-4'-carotenal, the aldehyde corresponding to the acidic neurosporaxanthin. Is also active on other monocyclic synthetic substrates such as beta-apo-8'-carotenal and beta-apo-10'-carotenal to produce beta-apo-14'-carotenal and retinal(beta-apo-15'-carotenal), respectively. Neurosporaxanthin is synthesized from geranyl-geranyl pyrophosphate (GGPP) through several enzymatic activities. Phytoene synthase activity performed by the bifunctional enzyme carAR first produces phytoene from geranyl-geranyl pyrophosphate (GGPP). The phytoene dehydrogenase carB then introduces 4 desaturations to lead to lycopene which is substrate of the carotene cyclase activity of carAR that leads to the production of gamma-carotene. CarB then performs a 5th desaturation reaction to yield torulene. Torulene is the substrate of the dioxidase carT that breaks the molecule, removing five carbon atoms to yield beta-apo-4'-carotenal, whereas the aldehyde dehydrogenase carD mediates the last step by converting beta-apo-4'-carotenal into neurosporaxanthin. The protein is Torulene dioxygenase of Fusarium fujikuroi (Bakanae and foot rot disease fungus).